The following is a 167-amino-acid chain: Small ribosomal subunit protein uS3m (167 aa).

A mitochondrion-targeting transit peptide spans 1 to 35; the sequence is MAWSASVRGLGQRVLACSRELPGAWRTLHTSAVCA.

This sequence belongs to the universal ribosomal protein uS3 family. As to quaternary structure, component of the mitochondrial ribosome small subunit (28S) which comprises a 12S rRNA and about 30 distinct proteins.

It is found in the mitochondrion. The protein is Small ribosomal subunit protein uS3m (Mrps24) of Mus musculus (Mouse).